A 1879-amino-acid chain; its full sequence is Protein TIC 214 (1879 aa).

The next 6 helical transmembrane spans lie at 18 to 38, 64 to 84, 87 to 107, 124 to 144, 172 to 192, and 218 to 238; these read IINS…FSIG, FITG…HLAL, PYTI…WTNP, LSIQ…HFIL, VGWL…LVWI, and IAPI…GRIP. Disordered regions lie at residues 245–305 and 586–702; these read ETSK…IDET and ISTS…DEPM. 2 stretches are compositionally biased toward acidic residues: residues 253 to 268 and 295 to 305; these read AETE…EIET and EKEDPDKIDET. The span at 586–688 shows a compositional bias: low complexity; the sequence is ISTSTPTSTP…SIPASTSTST (103 aa). Residues 691 to 701 are compositionally biased toward basic and acidic residues; sequence IKSKDEPKDEP.

Belongs to the TIC214 family. In terms of assembly, part of the Tic complex.

The protein localises to the plastid. It is found in the chloroplast inner membrane. Functionally, involved in protein precursor import into chloroplasts. May be part of an intermediate translocation complex acting as a protein-conducting channel at the inner envelope. The protein is Protein TIC 214 of Cucumis sativus (Cucumber).